A 396-amino-acid polypeptide reads, in one-letter code: Probable sugar efflux transporter (396 aa).

12 helical membrane-spanning segments follow: residues 15 to 35 (VVTLAVAAFIFNTTEFVPVGL), 50 to 70 (VGIMLTIYAWVVALMSLPFML), 81 to 101 (LICLFVVFIASHVLSFLSWSF), 103 to 123 (VLVISRIGVAFAHAIFWSITA), 136 to 156 (AQALSLIATGTALAMVLGLPL), 170 to 190 (FFAIGIGALVTLLCLIKLLPL), 209 to 229 (PALMSIYLLTVVVVTAHYTAY), 246 to 266 (FATALLLLLGGAGIIGSVIFG), 275 to 295 (ALVSTAIALLLVCLALLLPAA), 299 to 319 (IHLGVLSIFWGIAMMIIGLGM), 333 to 353 (VAMALFSGIFNIGIGAGALVG), and 364 to 384 (MIGYVGAVPAFAALIWSIIIF).

The protein belongs to the major facilitator superfamily. SotB (TC 2.A.1.2) family.

It localises to the cell inner membrane. Functionally, involved in the efflux of sugars. The physiological role may be the reduction of the intracellular concentration of toxic sugars or sugar metabolites. This is Probable sugar efflux transporter from Shigella flexneri serotype 5b (strain 8401).